Here is a 376-residue protein sequence, read N- to C-terminus: Thymidine kinase (376 aa).

Residues 1–44 are disordered; that stretch reads MASYPGHQHASAFDQAARSRGHSNRRTALRPRRQQEATEVRPEQ. Over residues 19–32 the composition is skewed to basic residues; it reads SRGHSNRRTALRPR. Basic and acidic residues predominate over residues 33-44; that stretch reads RQQEATEVRPEQ. Position 56-63 (56-63) interacts with ATP; that stretch reads GPHGMGKT. Glu83 serves as the catalytic Proton acceptor. Substrate contacts are provided by Tyr101 and Gln125. Arg216 serves as a coordination point for ATP. Arg222 serves as a coordination point for substrate. The interval 260 to 280 is disordered; sequence GQLSGTAVPPQGAEPQSNAGP.

Belongs to the herpesviridae thymidine kinase family. Homodimer.

It catalyses the reaction thymidine + ATP = dTMP + ADP + H(+). Catalyzes the transfer of the gamma-phospho group of ATP to thymidine to generate dTMP in the salvage pathway of pyrimidine synthesis. The dTMP serves as a substrate for DNA polymerase during viral DNA replication. Allows the virus to be reactivated and to grow in non-proliferative cells lacking a high concentration of phosphorylated nucleic acid precursors. In Human herpesvirus 1 (strain HFEM) (HHV-1), this protein is Thymidine kinase.